A 100-amino-acid polypeptide reads, in one-letter code: Cytochrome b (100 aa).

Helical transmembrane passes span 1–21 (MGSLLGLCLIVQIITGLFLAM), 45–66 (WLIRNFHANGASLFFICIYLHI), and 81–100 (WNIGVILLLLTMMTAFVGYV). Heme b is bound by residues His51 and His65.

Belongs to the cytochrome b family. As to quaternary structure, the cytochrome bc1 complex contains 3 respiratory subunits (MT-CYB, CYC1 and UQCRFS1), 2 core proteins (UQCRC1 and UQCRC2) and probably 6 low-molecular weight proteins. Heme b is required as a cofactor.

The protein localises to the mitochondrion inner membrane. Functionally, component of the ubiquinol-cytochrome c reductase complex (complex III or cytochrome b-c1 complex) that is part of the mitochondrial respiratory chain. The b-c1 complex mediates electron transfer from ubiquinol to cytochrome c. Contributes to the generation of a proton gradient across the mitochondrial membrane that is then used for ATP synthesis. In Polypterus sp. (Bichir), this protein is Cytochrome b (mt-cyb).